A 304-amino-acid polypeptide reads, in one-letter code: Capsid protein (304 aa).

Basic and acidic residues-rich tracts occupy residues 1–24 (MGDS…REAR) and 32–54 (FEGK…EMSL). The interval 1–54 (MGDSTKKAETAKDEGTSQERREARPLPTAADFEGKDTSENTDGRAADADGEMSL) is disordered.

This sequence belongs to the potexviruses coat protein family.

The protein localises to the virion. Its function is as follows. Required for genome encapsidation. Forms ribonucleoprotein complexes along with TGB1 helicase and viral RNA. This chain is Capsid protein, found in Potato virus M (strain Russian) (PVM).